The following is a 226-amino-acid chain: Large ribosomal subunit protein uL1 (226 aa).

The protein belongs to the universal ribosomal protein uL1 family. Part of the 50S ribosomal subunit.

Functionally, binds directly to 23S rRNA. The L1 stalk is quite mobile in the ribosome, and is involved in E site tRNA release. In terms of biological role, protein L1 is also a translational repressor protein, it controls the translation of the L11 operon by binding to its mRNA. The polypeptide is Large ribosomal subunit protein uL1 (Selenomonas ruminantium).